We begin with the raw amino-acid sequence, 540 residues long: Chaperonin GroEL (540 aa).

Residues 29–32 (TLGP), 86–90 (DGTTT), Gly413, 478–480 (DAL), and Asp494 each bind ATP.

It belongs to the chaperonin (HSP60) family. Forms a cylinder of 14 subunits composed of two heptameric rings stacked back-to-back. Interacts with the co-chaperonin GroES.

It localises to the cytoplasm. The catalysed reaction is ATP + H2O + a folded polypeptide = ADP + phosphate + an unfolded polypeptide.. In terms of biological role, together with its co-chaperonin GroES, plays an essential role in assisting protein folding. The GroEL-GroES system forms a nano-cage that allows encapsulation of the non-native substrate proteins and provides a physical environment optimized to promote and accelerate protein folding. In Clostridioides difficile (Peptoclostridium difficile), this protein is Chaperonin GroEL.